The primary structure comprises 88 residues: Cell division topological specificity factor (88 aa).

This sequence belongs to the MinE family.

Prevents the cell division inhibition by proteins MinC and MinD at internal division sites while permitting inhibition at polar sites. This ensures cell division at the proper site by restricting the formation of a division septum at the midpoint of the long axis of the cell. In Psychromonas ingrahamii (strain DSM 17664 / CCUG 51855 / 37), this protein is Cell division topological specificity factor.